The sequence spans 184 residues: mRNA transport regulator MTR2 (184 aa).

A disordered region spans residues Lys-111–Asn-135. The span at Ile-120 to Asn-129 shows a compositional bias: polar residues. Thr-125 is modified (phosphothreonine).

Interacts with MEX67.

It is found in the nucleus. In terms of biological role, affects mRNA transport from the nucleus to the cytoplasm. This is mRNA transport regulator MTR2 (MTR2) from Saccharomyces cerevisiae (strain ATCC 204508 / S288c) (Baker's yeast).